Here is a 95-residue protein sequence, read N- to C-terminus: MTITKEKIAAMLSSKLGFSNNLCEEIVHTVFSNILEIAKEQKLTLKNFGSFEVKQKNPRPGINFHTKAPVIIESKKNLRFVPSSKLKALINGSTR.

It belongs to the bacterial histone-like protein family.

This Rickettsia montanensis protein is Histone-like DNA-binding protein.